The following is a 100-amino-acid chain: MQLTPQEKDKLLIFTAALLAERRKARGLKLNYPEAIAYISAAILEGARDGRTVSELMNYGTTLLSRNDVMEGIAEMIHEIQVEATFPDGTKLVTVHNPIQ.

This sequence belongs to the urease gamma subunit family. As to quaternary structure, heterotrimer of UreA (gamma), UreB (beta) and UreC (alpha) subunits. Three heterotrimers associate to form the active enzyme.

It is found in the cytoplasm. The enzyme catalyses urea + 2 H2O + H(+) = hydrogencarbonate + 2 NH4(+). Its pathway is nitrogen metabolism; urea degradation; CO(2) and NH(3) from urea (urease route): step 1/1. The protein is Urease subunit gamma of Cyanothece sp. (strain PCC 7425 / ATCC 29141).